The following is a 264-amino-acid chain: Thymidylate synthase 2 (264 aa).

Position 21 (arginine 21) interacts with dUMP. Histidine 51 contributes to the (6R)-5,10-methylene-5,6,7,8-tetrahydrofolate binding site. Position 126–127 (126–127) interacts with dUMP; sequence RR. The Nucleophile role is filled by cysteine 146. DUMP contacts are provided by residues 166–169, asparagine 177, and 207–209; these read RSAD and HIY. Residue aspartate 169 participates in (6R)-5,10-methylene-5,6,7,8-tetrahydrofolate binding. Serine 263 is a binding site for (6R)-5,10-methylene-5,6,7,8-tetrahydrofolate.

Belongs to the thymidylate synthase family. Bacterial-type ThyA subfamily. As to quaternary structure, homodimer.

It is found in the cytoplasm. It carries out the reaction dUMP + (6R)-5,10-methylene-5,6,7,8-tetrahydrofolate = 7,8-dihydrofolate + dTMP. It participates in pyrimidine metabolism; dTTP biosynthesis. Functionally, catalyzes the reductive methylation of 2'-deoxyuridine-5'-monophosphate (dUMP) to 2'-deoxythymidine-5'-monophosphate (dTMP) while utilizing 5,10-methylenetetrahydrofolate (mTHF) as the methyl donor and reductant in the reaction, yielding dihydrofolate (DHF) as a by-product. This enzymatic reaction provides an intracellular de novo source of dTMP, an essential precursor for DNA biosynthesis. The chain is Thymidylate synthase 2 from Bacillus amyloliquefaciens (Bacillus velezensis).